Reading from the N-terminus, the 292-residue chain is UDP-N-acetylenolpyruvoylglucosamine reductase (292 aa).

The FAD-binding PCMH-type domain occupies 21 to 186 (QAGGLVDYLA…ISATFELQPD (166 aa)). The active site involves R165. S215 functions as the Proton donor in the catalytic mechanism. Residue E285 is part of the active site.

It belongs to the MurB family. FAD is required as a cofactor.

Its subcellular location is the cytoplasm. The catalysed reaction is UDP-N-acetyl-alpha-D-muramate + NADP(+) = UDP-N-acetyl-3-O-(1-carboxyvinyl)-alpha-D-glucosamine + NADPH + H(+). The protein operates within cell wall biogenesis; peptidoglycan biosynthesis. Functionally, cell wall formation. In Leuconostoc mesenteroides subsp. mesenteroides (strain ATCC 8293 / DSM 20343 / BCRC 11652 / CCM 1803 / JCM 6124 / NCDO 523 / NBRC 100496 / NCIMB 8023 / NCTC 12954 / NRRL B-1118 / 37Y), this protein is UDP-N-acetylenolpyruvoylglucosamine reductase.